A 911-amino-acid polypeptide reads, in one-letter code: Nitrate reductase [NADH] (911 aa).

Positions 1–10 are enriched in polar residues; the sequence is MAASVENRQY. The segment at 1-71 is disordered; that stretch reads MAASVENRQY…SEDEDDDDEK (71 aa). A compositionally biased stretch (acidic residues) spans 61-71; sequence SSEDEDDDDEK. Cysteine 188 is a binding site for Mo-molybdopterin. In terms of domain architecture, Cytochrome b5 heme-binding spans 536-611; it reads SKMYSMSEVR…LEDFRIGELI (76 aa). Histidine 571 and histidine 594 together coordinate heme. The region spanning 654–766 is the FAD-binding FR-type domain; sequence REKIPCKLVD…KGPLGHIEYQ (113 aa). FAD is bound by residues 706–709, 723–727, phenylalanine 728, phenylalanine 735, 740–742, and threonine 793; these read RAYT, VVKIY, and QMS.

The protein belongs to the nitrate reductase family. As to quaternary structure, homodimer. Requires FAD as cofactor. It depends on heme as a cofactor. Mo-molybdopterin is required as a cofactor.

It carries out the reaction nitrite + NAD(+) + H2O = nitrate + NADH + H(+). Its function is as follows. Nitrate reductase is a key enzyme involved in the first step of nitrate assimilation in plants, fungi and bacteria. This Solanum lycopersicum (Tomato) protein is Nitrate reductase [NADH] (NIA).